Reading from the N-terminus, the 326-residue chain is Aquaporin-3 (326 aa).

2 consecutive transmembrane segments (helical) span residues 24–44 and 64–84; these read LAEF…IITA and LAFG…GISG. Residues 88–90 carry the NPA 1 motif; the sequence is NPA. The helical transmembrane segment at 107–127 threads the bilayer; the sequence is LVYIFMQYMGAFFAASILYAV. N-linked (GlcNAc...) asparagine glycosylation is present at asparagine 146. 2 helical membrane-spanning segments follow: residues 166-186 and 196-216; these read IFDA…IIDP and IPLY…YNAG. The short motif at 220–222 is the NPA 2 element; it reads NPA. Residues 247-267 traverse the membrane as a helical segment; that stretch reads LWWLVPVIGPHVGGLLGGVTY. A glycan (N-linked (GlcNAc...) asparagine) is linked at asparagine 294.

Belongs to the MIP/aquaporin (TC 1.A.8) family.

The protein resides in the cell membrane. Its function is as follows. Aquaglyceroporin that may modulate the water content and osmolytes during anhydrobiosis. This Milnesium tardigradum (Water bear) protein is Aquaporin-3.